Reading from the N-terminus, the 173-residue chain is Mesencephalic astrocyte-derived neurotrophic factor homolog (173 aa).

The signal sequence occupies residues 1-22; sequence MKTAHLVVVVCFLAGALQTAVA. 4 cysteine pairs are disulfide-bonded: Cys28–Cys114, Cys31–Cys103, Cys61–Cys72, and Cys148–Cys151.

This sequence belongs to the ARMET family.

It is found in the secreted. In terms of biological role, required during the maturation of the embryonic nervous system for maintenance of neuronal and cuticular connectivity. Essential for maintenance of dopaminergic neurons and dopamine levels. The polypeptide is Mesencephalic astrocyte-derived neurotrophic factor homolog (Drosophila ananassae (Fruit fly)).